A 502-amino-acid polypeptide reads, in one-letter code: MRINLNPANAGLDLDVSIGENKNLGRIAQIIGPVLDVAFPPGKMPNIYNALVVKGRDTLGQEINVTCEVQQLLGNNRVRAVAMSATEGLKRGMDVVDMGNPLSVPVGGATLGRIFNVLGEPVDNLGPVDNRTKAPIHKSAPAFIQLDTKLSIFETGIKVVDLLAPYRRGGKIGLFGGAGVGKTVLIMELINNIAKAHGGVSVFGGVGERTREGNDLYMEMKESGVINEQNLAESKVALVYGQMNEPPGARMRVGLTALTMAEYFRDVNEQDVLLFIDNIFRFVQAGSEVSALLGRMPSAVGYQPTLSTEMGTLQERITSTKKGSITSIQAVYVPADDLTDPAPATTFAHLDATTVLSRGLAAKGIYPAVDPLDSTSTMLQPRIVGEEHYETAQQVKQTLQRYKELQDIIAILGLDELSEEDRLTVARARKIERFLSQPFFVAEVFTGSPGKYVGLAETIRGFKLILSGEFDSLPEQAFYLVGNIDEATAKATNLEMESKLKK.

A Phosphoserine modification is found at S17. Position 176 to 183 (176 to 183 (GGAGVGKT)) interacts with ATP.

Belongs to the ATPase alpha/beta chains family. As to quaternary structure, F-type ATPases have 2 components, CF(1) - the catalytic core - and CF(0) - the membrane proton channel. CF(1) has five subunits: alpha(3), beta(3), gamma(1), delta(1), epsilon(1). CF(0) has four main subunits: a(1), b(1), b'(1) and c(9-12).

The protein resides in the plastid. It is found in the chloroplast thylakoid membrane. The catalysed reaction is ATP + H2O + 4 H(+)(in) = ADP + phosphate + 5 H(+)(out). Functionally, produces ATP from ADP in the presence of a proton gradient across the membrane. The catalytic sites are hosted primarily by the beta subunits. In Lepidium virginicum (Virginia pepperweed), this protein is ATP synthase subunit beta, chloroplastic.